Consider the following 123-residue polypeptide: Small ribosomal subunit protein uS12 (123 aa).

The interval 1–21 (MPTIEQLVRKGRQAKPKKSKT) is disordered. The span at 9–20 (RKGRQAKPKKSK) shows a compositional bias: basic residues.

This sequence belongs to the universal ribosomal protein uS12 family. In terms of assembly, part of the 30S ribosomal subunit. Contacts proteins S8 and S17. May interact with IF1 in the 30S initiation complex.

Its function is as follows. With S4 and S5 plays an important role in translational accuracy. In terms of biological role, interacts with and stabilizes bases of the 16S rRNA that are involved in tRNA selection in the A site and with the mRNA backbone. Located at the interface of the 30S and 50S subunits, it traverses the body of the 30S subunit contacting proteins on the other side and probably holding the rRNA structure together. The combined cluster of proteins S8, S12 and S17 appears to hold together the shoulder and platform of the 30S subunit. The polypeptide is Small ribosomal subunit protein uS12 (Bifidobacterium longum (strain NCC 2705)).